The sequence spans 377 residues: MHVSHLQLADYRSYEAAYLELEPGVSTFIGPNGQGKTNLVEAIGYVATHSSHRVAHDAPLVRRGAQRAVIRAAVVRHGQTALIELEINPGRANRARLNRSPNTRMRDVLGILHTVLFAPEDLALVKGDPGERRRFLDELLTARAPRYAGVRSDYERVLKQRNALLKSAAAQNLHHRGGRDLPTLDVWDEHLAQIGAELLAARLALVAELQPLAAKAYGELTATQDPISLRYRCSATDEELDTTNRPQLVEILRAALLRARPDELRRGVSLVGPHRDDLQLWLNDLPAKGYASQGESWSYALALRLAGFELLRADGDDPVLLLDDVFAELDAERRRRLASYVRTAEQVLVTAAVPDDVPQELSGARFRVTGGSVERER.

30 to 37 (GPNGQGKT) provides a ligand contact to ATP.

The protein belongs to the RecF family.

It is found in the cytoplasm. Its function is as follows. The RecF protein is involved in DNA metabolism; it is required for DNA replication and normal SOS inducibility. RecF binds preferentially to single-stranded, linear DNA. It also seems to bind ATP. In Thermobifida fusca (strain YX), this protein is DNA replication and repair protein RecF.